Consider the following 421-residue polypeptide: Tol-Pal system protein TolB (421 aa).

A signal peptide spans 1-16 (MRILVFLWLGLSSLFA).

It belongs to the TolB family. As to quaternary structure, the Tol-Pal system is composed of five core proteins: the inner membrane proteins TolA, TolQ and TolR, the periplasmic protein TolB and the outer membrane protein Pal. They form a network linking the inner and outer membranes and the peptidoglycan layer.

It localises to the periplasm. Part of the Tol-Pal system, which plays a role in outer membrane invagination during cell division and is important for maintaining outer membrane integrity. The chain is Tol-Pal system protein TolB from Wolinella succinogenes (strain ATCC 29543 / DSM 1740 / CCUG 13145 / JCM 31913 / LMG 7466 / NCTC 11488 / FDC 602W) (Vibrio succinogenes).